Reading from the N-terminus, the 368-residue chain is tRNA-specific 2-thiouridylase MnmA (368 aa).

ATP is bound by residues 10 to 17 (AMSGGIDS) and methionine 36. Catalysis depends on cysteine 106, which acts as the Nucleophile. Cysteines 106 and 203 form a disulfide. An ATP-binding site is contributed by glycine 130. The interval 152–154 (KDQ) is interaction with tRNA. Cysteine 203 acts as the Cysteine persulfide intermediate in catalysis. An interaction with tRNA region spans residues 313 to 314 (RY).

It belongs to the MnmA/TRMU family.

It is found in the cytoplasm. It catalyses the reaction S-sulfanyl-L-cysteinyl-[protein] + uridine(34) in tRNA + AH2 + ATP = 2-thiouridine(34) in tRNA + L-cysteinyl-[protein] + A + AMP + diphosphate + H(+). Its function is as follows. Catalyzes the 2-thiolation of uridine at the wobble position (U34) of tRNA, leading to the formation of s(2)U34. The sequence is that of tRNA-specific 2-thiouridylase MnmA from Cytophaga hutchinsonii (strain ATCC 33406 / DSM 1761 / CIP 103989 / NBRC 15051 / NCIMB 9469 / D465).